The primary structure comprises 514 residues: Cardiolipin synthase 2 (514 aa).

3 helical membrane-spanning segments follow: residues 7–27, 41–61, and 71–91; these read LIFF…FIDV, ILGI…CVIF, and LTWL…YLLF. PLD phosphodiesterase domains follow at residues 249–276 and 427–454; these read INYR…GDEY and EKGF…DMRS. Residues His-254, Lys-256, Asp-261, His-432, Lys-434, and Asp-439 contribute to the active site.

It belongs to the phospholipase D family. Cardiolipin synthase subfamily.

It localises to the cell membrane. It catalyses the reaction 2 a 1,2-diacyl-sn-glycero-3-phospho-(1'-sn-glycerol) = a cardiolipin + glycerol. Catalyzes the reversible phosphatidyl group transfer from one phosphatidylglycerol molecule to another to form cardiolipin (CL) (diphosphatidylglycerol) and glycerol. This is Cardiolipin synthase 2 (cls2) from Bacillus cereus (strain ATCC 14579 / DSM 31 / CCUG 7414 / JCM 2152 / NBRC 15305 / NCIMB 9373 / NCTC 2599 / NRRL B-3711).